We begin with the raw amino-acid sequence, 311 residues long: Lipoyl synthase (311 aa).

C36, C41, C47, C66, C70, C73, and S280 together coordinate [4Fe-4S] cluster. A Radical SAM core domain is found at 51-269 (RDGPGTATFM…RVAESEFGFL (219 aa)).

The protein belongs to the radical SAM superfamily. Lipoyl synthase family. [4Fe-4S] cluster is required as a cofactor.

The protein resides in the cytoplasm. It catalyses the reaction [[Fe-S] cluster scaffold protein carrying a second [4Fe-4S](2+) cluster] + N(6)-octanoyl-L-lysyl-[protein] + 2 oxidized [2Fe-2S]-[ferredoxin] + 2 S-adenosyl-L-methionine + 4 H(+) = [[Fe-S] cluster scaffold protein] + N(6)-[(R)-dihydrolipoyl]-L-lysyl-[protein] + 4 Fe(3+) + 2 hydrogen sulfide + 2 5'-deoxyadenosine + 2 L-methionine + 2 reduced [2Fe-2S]-[ferredoxin]. It participates in protein modification; protein lipoylation via endogenous pathway; protein N(6)-(lipoyl)lysine from octanoyl-[acyl-carrier-protein]: step 2/2. Functionally, catalyzes the radical-mediated insertion of two sulfur atoms into the C-6 and C-8 positions of the octanoyl moiety bound to the lipoyl domains of lipoate-dependent enzymes, thereby converting the octanoylated domains into lipoylated derivatives. This Halobacterium salinarum (strain ATCC 29341 / DSM 671 / R1) protein is Lipoyl synthase.